Consider the following 409-residue polypeptide: Argininosuccinate synthase (409 aa).

ATP contacts are provided by residues 10–18 (AYSGGLDTS) and alanine 37. Residues tyrosine 90 and serine 95 each coordinate L-citrulline. Residue glycine 120 coordinates ATP. Positions 122, 126, and 127 each coordinate L-aspartate. Asparagine 126 serves as a coordination point for L-citrulline. L-citrulline contacts are provided by arginine 130, serine 182, serine 191, glutamate 267, and tyrosine 279.

This sequence belongs to the argininosuccinate synthase family. Type 1 subfamily. Homotetramer.

The protein localises to the cytoplasm. It carries out the reaction L-citrulline + L-aspartate + ATP = 2-(N(omega)-L-arginino)succinate + AMP + diphosphate + H(+). Its pathway is amino-acid biosynthesis; L-arginine biosynthesis; L-arginine from L-ornithine and carbamoyl phosphate: step 2/3. This chain is Argininosuccinate synthase, found in Thiobacillus denitrificans (strain ATCC 25259 / T1).